We begin with the raw amino-acid sequence, 162 residues long: N5-carboxyaminoimidazole ribonucleotide mutase (162 aa).

3 residues coordinate substrate: Ser11, Asp14, and Arg41.

The protein belongs to the AIR carboxylase family. Class I subfamily.

It catalyses the reaction 5-carboxyamino-1-(5-phospho-D-ribosyl)imidazole + H(+) = 5-amino-1-(5-phospho-D-ribosyl)imidazole-4-carboxylate. It participates in purine metabolism; IMP biosynthesis via de novo pathway; 5-amino-1-(5-phospho-D-ribosyl)imidazole-4-carboxylate from 5-amino-1-(5-phospho-D-ribosyl)imidazole (N5-CAIR route): step 2/2. In terms of biological role, catalyzes the conversion of N5-carboxyaminoimidazole ribonucleotide (N5-CAIR) to 4-carboxy-5-aminoimidazole ribonucleotide (CAIR). This Bacillus subtilis (strain 168) protein is N5-carboxyaminoimidazole ribonucleotide mutase.